Here is a 113-residue protein sequence, read N- to C-terminus: N(2)-fixation sustaining protein CowN (113 aa).

It belongs to the CowN family.

Its function is as follows. Is required to sustain N(2)-dependent growth in the presence of low levels of carbon monoxide (CO). Probably acts by protecting the N(2) fixation ability of the nitrogenase complex, which is inactivated in the presence of CO. This chain is N(2)-fixation sustaining protein CowN, found in Azoarcus sp. (strain BH72).